The sequence spans 500 residues: Betaine aldehyde dehydrogenase, chloroplastic (500 aa).

The transit peptide at 1–7 (MSMPIPS) directs the protein to the chloroplast. 238–243 (GSSATG) contacts NAD(+). Glu-260 acts as the Proton acceptor in catalysis. Cys-294 functions as the Nucleophile in the catalytic mechanism.

It belongs to the aldehyde dehydrogenase family. In terms of assembly, homodimer.

The protein resides in the plastid. The protein localises to the chloroplast. The enzyme catalyses betaine aldehyde + NAD(+) + H2O = glycine betaine + NADH + 2 H(+). It functions in the pathway amine and polyamine biosynthesis; betaine biosynthesis via choline pathway; betaine from betaine aldehyde: step 1/1. This chain is Betaine aldehyde dehydrogenase, chloroplastic, found in Beta vulgaris (Sugar beet).